Consider the following 437-residue polypeptide: Trigger factor (437 aa).

The region spanning 163–248 (GHMVTIDYAF…LNEIKRKELP (86 aa)) is the PPIase FKBP-type domain.

This sequence belongs to the FKBP-type PPIase family. Tig subfamily.

It is found in the cytoplasm. It carries out the reaction [protein]-peptidylproline (omega=180) = [protein]-peptidylproline (omega=0). In terms of biological role, involved in protein export. Acts as a chaperone by maintaining the newly synthesized protein in an open conformation. Functions as a peptidyl-prolyl cis-trans isomerase. The polypeptide is Trigger factor (Pelobacter propionicus (strain DSM 2379 / NBRC 103807 / OttBd1)).